Reading from the N-terminus, the 805-residue chain is Mitochondrial inner membrane m-AAA protease component AFG3L2 (805 aa).

A mitochondrion-targeting transit peptide spans 1 to 39 (MAHRCLLLWGRGACRPRGMPPMLLPGGRTGSTERLYLRM). Positions 40–67 (LYRYATTQAKTSRNSLLTDVIAAYQRLC) are cleaved as a propeptide — removed in mature form. A disordered region spans residues 74–127 (FEKYFPNGKNGKKTSEPKEVMGEKKEPKPAAAPRPSGGGVGGGGKRGGKKDDSH). Basic and acidic residues predominate over residues 86 to 101 (KTSEPKEVMGEKKEPK). Gly residues predominate over residues 109–118 (SGGGVGGGGK). Lys-118 is modified (N6-succinyllysine). 2 helical membrane-spanning segments follow: residues 144–164 (FKMY…YFLF) and 252–272 (GSFL…LYTI). ATP contacts are provided by Val-311, Ala-312, Thr-353, Gly-354, Lys-355, Thr-356, Leu-357, and His-491. Residue His-575 participates in Zn(2+) binding. Glu-576 is an active-site residue. Residues His-579 and Asp-650 each coordinate Zn(2+). The segment at 760-805 (FVEGTGSLDEDTSLPEGLKDWNREREGSEEPSGEKVTSPVQGAGPA) is disordered. Residues 776–787 (GLKDWNREREGS) are compositionally biased toward basic and acidic residues.

In the N-terminal section; belongs to the AAA ATPase family. It in the C-terminal section; belongs to the peptidase M41 family. In terms of assembly, homohexamer. Forms heterohexamers with SPG7. The m-AAA protease is either composed of homohexamers of AFG3L2 or heterohexamers of AFG3L2 and SPG7. Interacts with MAIP1. Interacts with DNAJC19. Interacts with PHB2. The cofactor is Zn(2+). Upon import into the mitochondrion, the N-terminal transit peptide is cleaved to generate an intermediate form which undergoes autocatalytic proteolytic processing to generate the proteolytically active mature form.

The protein localises to the mitochondrion inner membrane. It catalyses the reaction ATP + H2O = ADP + phosphate + H(+). Functionally, catalytic component of the m-AAA protease, a protease that plays a key role in proteostasis of inner mitochondrial membrane proteins, and which is essential for axonal and neuron development. AFG3L2 possesses both ATPase and protease activities: the ATPase activity is required to unfold substrates, threading them into the internal proteolytic cavity for hydrolysis into small peptide fragments. The m-AAA protease carries out protein quality control in the inner membrane of the mitochondria by mediating degradation of mistranslated or misfolded polypeptides. The m-AAA protease complex also promotes the processing and maturation of mitochondrial proteins, such as MRPL32/bL32m, PINK1 and SP7. Mediates protein maturation of the mitochondrial ribosomal subunit MRPL32/bL32m by catalyzing the cleavage of the presequence of MRPL32/bL32m prior to assembly into the mitochondrial ribosome. Required for SPG7 maturation into its active mature form after SPG7 cleavage by mitochondrial-processing peptidase (MPP). Required for the maturation of PINK1 into its 52kDa mature form after its cleavage by mitochondrial-processing peptidase (MPP). Acts as a regulator of calcium in neurons by mediating degradation of SMDT1/EMRE before its assembly with the uniporter complex, limiting the availability of SMDT1/EMRE for MCU assembly and promoting efficient assembly of gatekeeper subunits with MCU. Promotes the proteolytic degradation of GHITM upon hyperpolarization of mitochondria: progressive GHITM degradation leads to respiratory complex I degradation and broad reshaping of the mitochondrial proteome by AFG3L2. Also acts as a regulator of mitochondrial glutathione homeostasis by mediating cleavage and degradation of SLC25A39. SLC25A39 cleavage is prevented when SLC25A39 binds iron-sulfur. Involved in the regulation of OMA1-dependent processing of OPA1. May act by mediating processing of OMA1 precursor, participating in OMA1 maturation. The protein is Mitochondrial inner membrane m-AAA protease component AFG3L2 (AFG3L2) of Bos taurus (Bovine).